We begin with the raw amino-acid sequence, 165 residues long: Small ribosomal subunit protein uS5 (165 aa).

Residues 13–76 (LEEKVLVVNR…EAARKNLITI (64 aa)) enclose the S5 DRBM domain.

This sequence belongs to the universal ribosomal protein uS5 family. As to quaternary structure, part of the 30S ribosomal subunit. Contacts proteins S4 and S8.

Functionally, with S4 and S12 plays an important role in translational accuracy. In terms of biological role, located at the back of the 30S subunit body where it stabilizes the conformation of the head with respect to the body. The sequence is that of Small ribosomal subunit protein uS5 from Chlamydia felis (strain Fe/C-56) (Chlamydophila felis).